Consider the following 415-residue polypeptide: Carbamoyl phosphate synthase arginine-specific small chain (415 aa).

The transit peptide at 1 to 17 (MLRFLKPFPLRFGKRFY) directs the protein to the mitochondrion. Serine 88, glycine 272, and glycine 274 together coordinate L-glutamine. Residues 225–412 (NIAVIDCGVK…IKEAIKYQKS (188 aa)) form the Glutamine amidotransferase type-1 domain. Cysteine 301 acts as the Nucleophile in catalysis. Residues methionine 302, glutamine 305, asparagine 343, glycine 345, and tyrosine 346 each contribute to the L-glutamine site. Residues histidine 385 and glutamate 387 contribute to the active site.

This sequence belongs to the CarA family. In terms of assembly, heterodimer composed of 2 chains; the small (or glutamine) chain promotes the hydrolysis of glutamine to ammonia, which is used by the large (or ammonia) chain to synthesize carbamoyl phosphate.

It localises to the mitochondrion. Its subcellular location is the cytoplasm. It carries out the reaction hydrogencarbonate + L-glutamine + 2 ATP + H2O = carbamoyl phosphate + L-glutamate + 2 ADP + phosphate + 2 H(+). It catalyses the reaction L-glutamine + H2O = L-glutamate + NH4(+). It functions in the pathway amino-acid biosynthesis; L-arginine biosynthesis; carbamoyl phosphate from bicarbonate: step 1/1. Its function is as follows. Small subunit of the arginine-specific carbamoyl phosphate synthase (CPSase). CPSase catalyzes the formation of carbamoyl phosphate from the ammonia moiety of glutamine, carbonate, and phosphate donated by ATP, the first step of the arginine biosynthetic pathway. The small subunit (glutamine amidotransferase) binds and cleaves glutamine to supply the large subunit with the substrate ammonia. This Schizosaccharomyces pombe (strain 972 / ATCC 24843) (Fission yeast) protein is Carbamoyl phosphate synthase arginine-specific small chain (arg5).